The primary structure comprises 343 residues: Anthranilate phosphoribosyltransferase (343 aa).

Residues Gly-84, 87 to 88 (GD), Thr-92, 94 to 97 (NIST), 112 to 120 (KHGNRGVSS), and Ser-124 each bind 5-phospho-alpha-D-ribose 1-diphosphate. Gly-84 serves as a coordination point for anthranilate. Position 96 (Ser-96) interacts with Mg(2+). Asn-115 lines the anthranilate pocket. Arg-170 provides a ligand contact to anthranilate. Mg(2+) is bound by residues Asp-229 and Glu-230.

Belongs to the anthranilate phosphoribosyltransferase family. As to quaternary structure, homodimer. It depends on Mg(2+) as a cofactor.

It carries out the reaction N-(5-phospho-beta-D-ribosyl)anthranilate + diphosphate = 5-phospho-alpha-D-ribose 1-diphosphate + anthranilate. It functions in the pathway amino-acid biosynthesis; L-tryptophan biosynthesis; L-tryptophan from chorismate: step 2/5. Catalyzes the transfer of the phosphoribosyl group of 5-phosphorylribose-1-pyrophosphate (PRPP) to anthranilate to yield N-(5'-phosphoribosyl)-anthranilate (PRA). The chain is Anthranilate phosphoribosyltransferase from Burkholderia cenocepacia (strain ATCC BAA-245 / DSM 16553 / LMG 16656 / NCTC 13227 / J2315 / CF5610) (Burkholderia cepacia (strain J2315)).